The following is a 264-amino-acid chain: Major prion protein 1 (264 aa).

Residues 1–24 (MVKSHIGSWILVLFVAMWSDVALC) form the signal peptide. The interaction with GRB2, ERI3 and SYN1 stretch occupies residues 25–241 (KKRPKPGGGW…ESEAYYQRGA (217 aa)). The interval 28 to 118 (PKPGGGWNTG…QWNKPSKPKT (91 aa)) is disordered. 6 tandem repeats follow at residues 54 to 62 (SQGGGGWGQ), 63 to 70 (PHGGGWGQ), 71 to 78 (PHGGGWGQ), 79 to 86 (PHGGGWGQ), 87 to 94 (PHGGGWGQ), and 95 to 103 (PHGGGGWGQ). The segment at 54–103 (SQGGGGWGQPHGGGWGQPHGGGWGQPHGGGWGQPHGGGWGQPHGGGGWGQ) is 6 X 8 AA tandem repeats of P-H-G-G-G-W-G-Q. Over residues 55–107 (QGGGGWGQPHGGGWGQPHGGGWGQPHGGGWGQPHGGGWGQPHGGGGWGQGGTH) the composition is skewed to gly residues. 12 residues coordinate Cu(2+): histidine 72, glycine 73, glycine 74, histidine 80, glycine 81, glycine 82, histidine 88, glycine 89, glycine 90, histidine 96, glycine 98, and glycine 99. The cysteines at positions 190 and 225 are disulfide-linked. N-linked (GlcNAc...) asparagine glycans are attached at residues asparagine 192 and asparagine 208. A lipid anchor (GPI-anchor amidated alanine) is attached at alanine 241. A propeptide spans 242-264 (SVILFSSPPVILLISFLIFLIVG) (removed in mature form).

This sequence belongs to the prion family. As to quaternary structure, monomer and homodimer. Has a tendency to aggregate into amyloid fibrils containing a cross-beta spine, formed by a steric zipper of superposed beta-strands. Soluble oligomers may represent an intermediate stage on the path to fibril formation. Copper binding may promote oligomerization. Interacts with GRB2, APP, ERI3/PRNPIP and SYN1. Mislocalized cytosolically exposed PrP interacts with MGRN1; this interaction alters MGRN1 subcellular location and causes lysosomal enlargement. Interacts with KIAA1191.

The protein resides in the cell membrane. The protein localises to the golgi apparatus. In terms of biological role, its primary physiological function is unclear. Has cytoprotective activity against internal or environmental stresses. May play a role in neuronal development and synaptic plasticity. May be required for neuronal myelin sheath maintenance. May play a role in iron uptake and iron homeostasis. Soluble oligomers are toxic to cultured neuroblastoma cells and induce apoptosis (in vitro). Association with GPC1 (via its heparan sulfate chains) targets PRNP to lipid rafts. Also provides Cu(2+) or Zn(2+) for the ascorbate-mediated GPC1 deaminase degradation of its heparan sulfate side chains. The polypeptide is Major prion protein 1 (Tragelaphus strepsiceros (Greater kudu)).